Here is a 576-residue protein sequence, read N- to C-terminus: Putative export ATP-binding/permease protein RT0691 (576 aa).

Residues 20–303 form the ABC transmembrane type-1 domain; it reads LIIVMISLLS…IFELLSEIHL (284 aa). 6 consecutive transmembrane segments (helical) span residues 21–41, 61–81, 135–155, 158–178, 242–262, and 277–297; these read IIVM…GSVF, ILYI…RSYF, FLSF…LMFF, FKLA…LIKF, ALFF…IVWI, and IISF…IFEL. Residues 336–572 enclose the ABC transporter domain; sequence IEFKNVDFTY…SEIYRNICRE (237 aa). 371–378 is a binding site for ATP; it reads GRSGAGKS.

This sequence belongs to the ABC transporter superfamily. Homodimer.

The protein localises to the cell inner membrane. Functionally, part of an ABC transporter complex. Transmembrane domains (TMD) form a pore in the inner membrane and the ATP-binding domain (NBD) is responsible for energy generation. This chain is Putative export ATP-binding/permease protein RT0691, found in Rickettsia typhi (strain ATCC VR-144 / Wilmington).